Here is a 122-residue protein sequence, read N- to C-terminus: Ribosome-binding factor A (122 aa).

It belongs to the RbfA family. In terms of assembly, monomer. Binds 30S ribosomal subunits, but not 50S ribosomal subunits or 70S ribosomes.

The protein localises to the cytoplasm. One of several proteins that assist in the late maturation steps of the functional core of the 30S ribosomal subunit. Associates with free 30S ribosomal subunits (but not with 30S subunits that are part of 70S ribosomes or polysomes). Required for efficient processing of 16S rRNA. May interact with the 5'-terminal helix region of 16S rRNA. The sequence is that of Ribosome-binding factor A from Halothermothrix orenii (strain H 168 / OCM 544 / DSM 9562).